Here is a 364-residue protein sequence, read N- to C-terminus: MRLLIAGGGTGGHLFPGIAVAEEFLSRKKGNEVLFVGTWRGIEARVLPKLGYRLECITAAGIRGKGSVARAKGLAKFLYGYAQSRKILKEFKPDLVLGVGGYASAPALLAARGMHIPRFIHEQNAIPGFTNKMLATVAERVFISLEESRKFFPEERTLLTGNPLRRQILEQVALAPQEERTDDAFHLLVFGGSAGAHRINLIMGEVLPHLEDVKERLRITHQTGENDLEDVTSAYEEQGVAADVVAFIDSMADAYRWADLVVCRAGATTIAEITACGKPCIFIPYPHAVDDHQRRNAEALLKRGAGFVIIEQELSGEVLAKTIRDLMADPARLKSVGEAAQGLARLDAAQVIVDEMMTSKRKEK.

UDP-N-acetyl-alpha-D-glucosamine is bound by residues 10–12 (TGG), N124, R165, S193, I248, and Q293.

Belongs to the glycosyltransferase 28 family. MurG subfamily.

The protein resides in the cell inner membrane. The enzyme catalyses di-trans,octa-cis-undecaprenyl diphospho-N-acetyl-alpha-D-muramoyl-L-alanyl-D-glutamyl-meso-2,6-diaminopimeloyl-D-alanyl-D-alanine + UDP-N-acetyl-alpha-D-glucosamine = di-trans,octa-cis-undecaprenyl diphospho-[N-acetyl-alpha-D-glucosaminyl-(1-&gt;4)]-N-acetyl-alpha-D-muramoyl-L-alanyl-D-glutamyl-meso-2,6-diaminopimeloyl-D-alanyl-D-alanine + UDP + H(+). Its pathway is cell wall biogenesis; peptidoglycan biosynthesis. Cell wall formation. Catalyzes the transfer of a GlcNAc subunit on undecaprenyl-pyrophosphoryl-MurNAc-pentapeptide (lipid intermediate I) to form undecaprenyl-pyrophosphoryl-MurNAc-(pentapeptide)GlcNAc (lipid intermediate II). The sequence is that of UDP-N-acetylglucosamine--N-acetylmuramyl-(pentapeptide) pyrophosphoryl-undecaprenol N-acetylglucosamine transferase from Geobacter metallireducens (strain ATCC 53774 / DSM 7210 / GS-15).